The following is a 348-amino-acid chain: Killer cell immunoglobulin-like receptor 2DL1 (348 aa).

Residues 1–21 (MSLLVVSMACVGFFLLQGAWP) form the signal peptide. At 22-245 (HEGVHRKPSL…SKTGNPRHLH (224 aa)) the chain is on the extracellular side. Ig-like C2-type domains are found at residues 42-107 (EETV…VTHS) and 142-205 (GENV…FHDS). The cysteines at positions 49 and 100 are disulfide-linked. N-linked (GlcNAc...) asparagine glycosylation is found at Asn67, Asn84, Asn144, and Asn178. Cys149 and Cys198 form a disulfide bridge. The segment at 220–239 (VTGNPSNSWPSPTEPSSKTG) is disordered. A helical transmembrane segment spans residues 246–264 (ILIGTSVVIILFILLFFLL). At 265 to 348 (HRWCSNKKNA…ESRSKVVSCP (84 aa)) the chain is on the cytoplasmic side.

The protein belongs to the immunoglobulin superfamily. Interacts with ARRB2. Interacts with PTPN6; the interaction is enhanced by ARRB2. Interacts with PTPN11; the interaction is enhanced by ARRB2. Expressed by NK cells.

It is found in the cell membrane. Its function is as follows. Receptor on natural killer (NK) cells for some HLA-C alleles such as w4 and w6. Inhibits the activity of NK cells thus preventing cell lysis. This chain is Killer cell immunoglobulin-like receptor 2DL1, found in Homo sapiens (Human).